A 245-amino-acid chain; its full sequence is Outer membrane protein assembly factor BamD (245 aa).

The first 19 residues, 1 to 19 (MTRMKYLVAAATLSLFLAG), serve as a signal peptide directing secretion. Cysteine 20 carries N-palmitoyl cysteine lipidation. Cysteine 20 carries the S-diacylglycerol cysteine lipid modification.

The protein belongs to the BamD family. Part of the Bam complex, which is composed of the outer membrane protein BamA, and four lipoproteins BamB, BamC, BamD and BamE.

It localises to the cell outer membrane. Functionally, part of the outer membrane protein assembly complex, which is involved in assembly and insertion of beta-barrel proteins into the outer membrane. Constitutes, with BamA, the core component of the assembly machinery. The sequence is that of Outer membrane protein assembly factor BamD from Escherichia coli O157:H7.